The chain runs to 461 residues: Steroidogenic factor 1 (461 aa).

The nuclear receptor DNA-binding region spans 10–85 (DELCPVCGDK…VGMRLEAVRA (76 aa)). An NR C4-type zinc finger spans residues 13–33 (CPVCGDKVSGYHYGLLTCESC). N6-acetyllysine is present on residues K34, K38, and K72. Residues 49–73 (CTESQSCKIDKTQRKRCPFCRFQKC) form an NR C4-type zinc finger. Residue K119 forms a Glycyl lysine isopeptide (Lys-Gly) (interchain with G-Cter in SUMO) linkage. The segment at 119–157 (KLETGPPMGVPPPPPPAPDYVLPPSLHGPEPKGLAAGPP) is disordered. The segment covering 126-136 (MGVPPPPPPAP) has biased composition (pro residues). A Glycyl lysine isopeptide (Lys-Gly) (interchain with G-Cter in SUMO) cross-link involves residue K194. Residue S203 is modified to Phosphoserine; by CDK7. One can recognise an NR LBD domain in the interval 222-459 (NVPELILQLL…NLLIEMLQAK (238 aa)). The segment at 230–461 (LLQLEPDEDQ…LIEMLQAKQT (232 aa)) is important for dimerization. Residues G341, Y436, and K440 each coordinate a 1,2-diacyl-sn-glycero-3-phosphocholine. A 1,2-diacylglycero-3-phosphoethanolamine is bound by residues G341, Y436, and K440.

This sequence belongs to the nuclear hormone receptor family. NR5 subfamily. Binds DNA as a monomer. Interacts with NR0B2 and PPARGC1A. Part of a complex consisting of SFPQ, NONO and NR5A1. Interacts with NCOA2. Interacts with DGKQ and CDK7. Binds to and activated by HIPK3. Acetylation stimulates the transcriptional activity. Post-translationally, sumoylation reduces CDK7-mediated phosphorylation on Ser-203. In terms of processing, phosphorylated on Ser-203 by CDK7. This phosphorylation promotes transcriptional activity. As to expression, high expressed in the adrenal cortex, the ovary, the testis, and the spleen.

The protein resides in the nucleus. Transcriptional activator. Essential for sexual differentiation and formation of the primary steroidogenic tissues. Binds to the Ad4 site found in the promoter region of steroidogenic P450 genes such as CYP11A, CYP11B and CYP21B. Also regulates the AMH/Muellerian inhibiting substance gene as well as the AHCH and STAR genes. 5'-YCAAGGYC-3' and 5'-RRAGGTCA-3' are the consensus sequences for the recognition by NR5A1. The SFPQ-NONO-NR5A1 complex binds to the CYP17 promoter and regulates basal and cAMP-dependent transcriptional activity. Binds phosphatidylcholine. Binds phospholipids with a phosphatidylinositol (PI) headgroup, in particular PI(3,4)P2 and PI(3,4,5)P3. Activated by the phosphorylation of NR5A1 by HIPK3 leading to increased steroidogenic gene expression upon cAMP signaling pathway stimulation. The chain is Steroidogenic factor 1 (NR5A1) from Homo sapiens (Human).